Here is a 122-residue protein sequence, read N- to C-terminus: MIQTESRLKVADNSGAKELLTIRVLGGSSRKFAGIGDIVVATVKSAAPGGAVKKGEVVKAVIVRTKSGAKRPDGSYIKFDENAAVLIRDDKTPRGTRIFGPVARELREGGYMKIVSLAPEVL.

Belongs to the universal ribosomal protein uL14 family. In terms of assembly, part of the 50S ribosomal subunit. Forms a cluster with proteins L3 and L19. In the 70S ribosome, L14 and L19 interact and together make contacts with the 16S rRNA in bridges B5 and B8.

Functionally, binds to 23S rRNA. Forms part of two intersubunit bridges in the 70S ribosome. The chain is Large ribosomal subunit protein uL14 from Lactococcus lactis subsp. lactis (strain IL1403) (Streptococcus lactis).